Here is a 557-residue protein sequence, read N- to C-terminus: Arginine--tRNA ligase (557 aa).

A 'HIGH' region motif is present at residues 132-142 (ANPTGDLHLGH).

The protein belongs to the class-I aminoacyl-tRNA synthetase family. In terms of assembly, monomer.

The protein localises to the cytoplasm. It carries out the reaction tRNA(Arg) + L-arginine + ATP = L-arginyl-tRNA(Arg) + AMP + diphosphate. The protein is Arginine--tRNA ligase of Bacillus pumilus (strain SAFR-032).